A 993-amino-acid chain; its full sequence is Nisin biosynthesis protein NisB (993 aa).

Residues 838-851 (AIFCADSKIIPNLL) traverse the membrane as a helical segment.

This sequence to B.subtilis SpaB and S.epidermidis EpiB.

The protein resides in the cell membrane. Its function is as follows. Involved in the post-translational modification of the lantibiotic nisin. The chain is Nisin biosynthesis protein NisB (nisB) from Lactococcus lactis subsp. lactis (Streptococcus lactis).